We begin with the raw amino-acid sequence, 274 residues long: Probable WRKY transcription factor 49 (274 aa).

A DNA-binding region (WRKY) is located at residues 108–173 (NSNGMCDDGY…YEGFHFHYTY (66 aa)). The segment at 188–228 (KTKIHKHNAQDMNKKSQTQEESKEAQLGELTNQNHPVNKAQ) is disordered. A coiled-coil region spans residues 193 to 222 (KHNAQDMNKKSQTQEESKEAQLGELTNQNH). Basic and acidic residues predominate over residues 195–213 (NAQDMNKKSQTQEESKEAQ). A compositionally biased stretch (polar residues) spans 216-228 (ELTNQNHPVNKAQ).

Belongs to the WRKY group II-c family.

Its subcellular location is the nucleus. Transcription factor. Interacts specifically with the W box (5'-(T)TGAC[CT]-3'), a frequently occurring elicitor-responsive cis-acting element. The protein is Probable WRKY transcription factor 49 (WRKY49) of Arabidopsis thaliana (Mouse-ear cress).